Consider the following 411-residue polypeptide: MNALAATNRNFRHASRILGLDSKLEKSLLIPFREIKVECTIPKDDGSLATYVGFRVQHDNARGPMKGGIRYHPEVDPDEVNALAQLMTWKTAVVDIPYGGAKGGIGCTPKDLSMSELERLTRVFTQKIHDLIGTHTDVPAPDMGTNAQTMAWILDEYSKFHGHSPAVVTGKPIALGGSLGREAATGRGVVFATEALLAQHGKSIKGLTFVIQGFGNVGSWVARLIGERGGKIIAVSDVTGAVKNQNGLDIVDLLRHKEETGCLTNFSGGDHMDPNELLTHECDVLIPCALGGVLNKENAADVKAKFIIEAANHPTDPEADEILSKKGGVILPDIYANAGGVTVSYFEWVQNIQGFMWEEEKVNNELQKYMTKAFHNIKAMCQSHNCSLRMGAFTLAVNRVACATTLRGWEA.

The active site involves K102.

Belongs to the Glu/Leu/Phe/Val dehydrogenases family.

The enzyme catalyses L-glutamate + NAD(+) + H2O = 2-oxoglutarate + NH4(+) + NADH + H(+). It catalyses the reaction L-glutamate + NADP(+) + H2O = 2-oxoglutarate + NH4(+) + NADPH + H(+). The protein is Glutamate dehydrogenase (GDH) of Vitis vinifera (Grape).